The following is a 592-amino-acid chain: MRSHYCGSVNESHLDQEVTLCGWVNRRRDHGGVIFIDLRDREGLVQVVFDPDLPEVFATAERVRSEYVLKVKGRVRRRPAGTENPDLPTGAIEVLGRELTVLNSAETPPFQLDEDEVNEETRLRYRYVDLRRPAMQKRLQMRARVSRTLRRFLEDNGFLDIETPMLTKATPEGARDYIVPSRTHPGSFFALPQSPQLFKQLLMMGGMDRYYQIVRCFRDEDLRADRQPEFTQLDIETSFMDEEGIMGLMEEMVRELFAQVLEVPLHTPFQRMSYAEAMARYGSDKPDLRIPLELTELTDIMGEVDFKVFSGPARDPAGRVAALRVPKGGELSRKDIDDYTHFVGRYGAKGLAYIKVNDLNAGREGLQSPILKFMPDTVVVEILGRTGAEDGDLIFFGADKARIVNEALGALRVKLGHDLGLVERGWRPLWVVDFPMFEHDEKEGRWVALHHPFTAPRVERPEELTGNPGEMISRAYDMVLNGTEVGGGSVRIHTTAMQQAVFNLLGIGEAEARDKFGFLLDALKYGCPPHGGIAFGLDRLVMLMTGSQSIRDVMAFPKTQTAHCPLTDAPAEVSDAQLKELSIRVKKQTASG.

L-aspartate is bound at residue E172. Residues 196 to 199 (QLFK) form an aspartate region. R218 is an L-aspartate binding site. Residues 218–220 (RDE) and Q227 contribute to the ATP site. H450 is a binding site for L-aspartate. Residue E484 coordinates ATP. R491 contacts L-aspartate. 536–539 (GLDR) provides a ligand contact to ATP.

The protein belongs to the class-II aminoacyl-tRNA synthetase family. Type 1 subfamily. Homodimer.

The protein localises to the cytoplasm. The enzyme catalyses tRNA(Asx) + L-aspartate + ATP = L-aspartyl-tRNA(Asx) + AMP + diphosphate. Aspartyl-tRNA synthetase with relaxed tRNA specificity since it is able to aspartylate not only its cognate tRNA(Asp) but also tRNA(Asn). Reaction proceeds in two steps: L-aspartate is first activated by ATP to form Asp-AMP and then transferred to the acceptor end of tRNA(Asp/Asn). In Thioalkalivibrio sulfidiphilus (strain HL-EbGR7), this protein is Aspartate--tRNA(Asp/Asn) ligase.